A 151-amino-acid chain; its full sequence is ADDEDCCSYEDRREIRHIWDDVWSSSFTDRRVAIVRAVFDDLFKHYPTSKALFERVKIDEPESGEFKSHLVRVANGLDLLINLLDDTLVLQSHLGHLADQHIQRKGVTKEYFRGIGEAFARVLPQVLSCFNVDAWNRCFHRLVARIAKDLP.

Residues 6–151 (CCSYEDRREI…LVARIAKDLP (146 aa)) form the Globin domain. A disulfide bond links Cys-7 and Cys-138. His-101 contacts heme b.

It belongs to the globin family. The extracellular hemoglobin of the earthworm consists of 12 subunits that have a hexagonal bilayer structure with a molecular weight near 3.8 million. Each one-twelfth subunit is composed primarily of disulfide linked trimers (chains A, B, and C) and monomers (chain D).

The protein localises to the secreted. The sequence is that of Extracellular globin-4 from Lumbricus terrestris (Common earthworm).